The following is a 194-amino-acid chain: CASP-like protein 2D1 (194 aa).

Over residues 1-16 (MRDNNNNNTREEERSS) the composition is skewed to basic and acidic residues. The interval 1 to 26 (MRDNNNNNTREEERSSSSKQQQPQAP) is disordered. Residues 1-30 (MRDNNNNNTREEERSSSSKQQQPQAPMSLK) are Cytoplasmic-facing. Residues 31-51 (IIDSCLRLSVVPLSVATIWLT) form a helical membrane-spanning segment. At 52 to 74 (VTNHESNPDYGNLEYNSIMGLKY) the chain is on the extracellular side. A helical membrane pass occupies residues 75-95 (MVGVSAISAIYALLSTVSSWV). The Cytoplasmic segment spans residues 96–110 (TCLVSKAWLFFIPDQ). The helical transmembrane segment at 111–133 (VLAYVMTTSVAGATEIVYLLNKG) threads the bilayer. Topologically, residues 134-152 (DKIVTWSEMCSSYPHYCSK) are extracellular. Residues 153-173 (LTIALGLHVFVLFFFLFLSVI) form a helical membrane-spanning segment. The Cytoplasmic portion of the chain corresponds to 174 to 194 (SAYRAFSPFDPPCDSQTNNDA).

This sequence belongs to the Casparian strip membrane proteins (CASP) family. In terms of assembly, homodimer and heterodimers.

The protein localises to the cell membrane. In Arabidopsis thaliana (Mouse-ear cress), this protein is CASP-like protein 2D1.